The primary structure comprises 1086 residues: DNA polymerase delta catalytic subunit (1086 aa).

The disordered stretch occupies residues 1 to 64 (MTDRSSNEGV…KTSSFEDELA (64 aa)). A compositionally biased stretch (basic and acidic residues) spans 29–58 (EITDVKRRRLSERNGYGDKKGSSSKEKTSS). Zn(2+)-binding residues include Cys-993, Cys-996, Cys-1008, and Cys-1011. The CysA-type zinc-finger motif lies at 993 to 1011 (CLGCKAPIKKGKTALCENC). Positions 1040, 1043, 1053, and 1058 each coordinate [4Fe-4S] cluster. Positions 1040-1058 (CQRCQGSMHQDVICTSRDC) match the CysB motif motif.

This sequence belongs to the DNA polymerase type-B family. As to quaternary structure, heterotetramer that consist of the pol3, cdc1, cdc27 and cdm1 subunits. The pol3 subunit contains the polymerase active site and most likely the active site for the 3'-5' exonuclease activity. It depends on [4Fe-4S] cluster as a cofactor.

It localises to the nucleus. It carries out the reaction DNA(n) + a 2'-deoxyribonucleoside 5'-triphosphate = DNA(n+1) + diphosphate. Catalytic component of DNA polymerase delta (DNA polymerase III) which participates in chromosomal DNA replication. Required during synthesis of the lagging DNA strands at the replication fork, binds at/or near replication origins and moves along DNA with the replication fork. Participates in leading strand synthesis during replication initiation and termination. Has 3'-5' proofreading exonuclease activity that corrects errors arising during DNA replication. This is DNA polymerase delta catalytic subunit (pol3) from Schizosaccharomyces pombe (strain 972 / ATCC 24843) (Fission yeast).